Here is a 142-residue protein sequence, read N- to C-terminus: MESFLTEIQIRVLNLRKKGHTQEEIAHVMGTSRANISMVEKRARENIEKAKNTLNIYNDIIAPSKIKVEKGTDVFNIPNVIFSKSDEEEIHVNYSSLQIMEFINQNAKRYIKNRMVVEPFIITILQNGEIYVHDFEEEKAKN.

The protein belongs to the Tfx family.

Functionally, putative transcriptional regulator. The protein is Putative transcriptional regulatory protein Mevan_1098 of Methanococcus vannielii (strain ATCC 35089 / DSM 1224 / JCM 13029 / OCM 148 / SB).